A 268-amino-acid polypeptide reads, in one-letter code: GTP cyclohydrolase FolE2 (268 aa).

It belongs to the GTP cyclohydrolase IV family.

It carries out the reaction GTP + H2O = 7,8-dihydroneopterin 3'-triphosphate + formate + H(+). It participates in cofactor biosynthesis; 7,8-dihydroneopterin triphosphate biosynthesis; 7,8-dihydroneopterin triphosphate from GTP: step 1/1. Converts GTP to 7,8-dihydroneopterin triphosphate. The polypeptide is GTP cyclohydrolase FolE2 (Paraburkholderia phymatum (strain DSM 17167 / CIP 108236 / LMG 21445 / STM815) (Burkholderia phymatum)).